Reading from the N-terminus, the 112-residue chain is CLAVATA3/ESR (CLE)-related protein 44 (112 aa).

The signal sequence occupies residues 1–39; the sequence is MATTIDQTSIKSLHFHQVIRLIITIIFLAFLFLIGPTSS. The disordered stretch occupies residues 41–112; that stretch reads NHHLHESSSK…VPSGPNPISN (72 aa). The span at 62 to 71 shows a compositional bias: polar residues; sequence QPSTPSSSTM. Hydroxyproline occurs at positions 104 and 107. Pro-107 carries an O-linked (Ara...) hydroxyproline glycan.

It belongs to the CLV3/ESR signal peptide family. As to quaternary structure, interacts specifically with the leucine-rich repeat receptor-like protein kinase TDR, especially in the presence of SERK2. The O-glycosylation (arabinosylation) of the hydroxyproline Pro-107 enhances binding affinity of the CLE44p peptide for its receptor. As to expression, mostly expressed in flowers and leaves. Widely expressed along the vascular strands. In roots and hypocotyls, present in endodermal cells as well as cells in the phloem and the adjacent pericycle.

The protein resides in the secreted. The protein localises to the extracellular space. Its function is as follows. Extracellular signal peptide that regulates cell fate. May act with TDR as a ligand-receptor pair in a signal transduction pathway that represses tracheary element differentiation but promotes the formation of procambial cells adjacent to phloem cells in the veins. Regulates the transition of protophloem cells from proliferation to differentiation, thus impinging on postembryonic growth capacity of the root meristem; this signaling pathway requires CRN and CLV2. This is CLAVATA3/ESR (CLE)-related protein 44 from Arabidopsis thaliana (Mouse-ear cress).